We begin with the raw amino-acid sequence, 313 residues long: tRNA dimethylallyltransferase (313 aa).

Residue 10 to 17 (GPTASGKT) coordinates ATP. Residue 12-17 (TASGKT) participates in substrate binding. 3 interaction with substrate tRNA regions span residues 35–38 (DSAM), 159–163 (QRIQR), and 240–245 (RCVGYR).

Belongs to the IPP transferase family. In terms of assembly, monomer. Requires Mg(2+) as cofactor.

It carries out the reaction adenosine(37) in tRNA + dimethylallyl diphosphate = N(6)-dimethylallyladenosine(37) in tRNA + diphosphate. Its function is as follows. Catalyzes the transfer of a dimethylallyl group onto the adenine at position 37 in tRNAs that read codons beginning with uridine, leading to the formation of N6-(dimethylallyl)adenosine (i(6)A). This Legionella pneumophila (strain Lens) protein is tRNA dimethylallyltransferase.